A 456-amino-acid polypeptide reads, in one-letter code: Serine/threonine-protein kinase PBS1 (456 aa).

Residues 1-57 (MGCFSCFDSSDDEKLNPVDESNHGQKKQSQPTVSNNISGLPSGGEKLSSKTNGGSKR) are disordered. A lipid anchor (N-myristoyl glycine) is attached at Gly-2. S-palmitoyl cysteine attachment occurs at residues Cys-3 and Cys-6. The segment covering 12–23 (DEKLNPVDESNH) has biased composition (basic and acidic residues). A Phosphoserine modification is found at Ser-21. A compositionally biased stretch (polar residues) spans 27 to 39 (KQSQPTVSNNISG). The 278-residue stretch at 86–363 (FHPDTFLGEG…ADVVTALSYL (278 aa)) folds into the Protein kinase domain. ATP contacts are provided by residues 92 to 100 (LGEGGFGRV) and Lys-115. Tyr-160 bears the Phosphotyrosine mark. Asp-213 acts as the Proton acceptor in catalysis. Phosphoserine occurs at positions 217 and 247. Phosphothreonine is present on residues Thr-248 and Thr-253. A Phosphotyrosine modification is found at Tyr-261. The short motif at 292–296 (SEMPH) is the Recognition motif required for RPS5-mediated plant resistance to P.syringae element. The segment at 368–456 (YDPSKDDSRR…QGTSESNSTG (89 aa)) is disordered. Basic and acidic residues-rich tracts occupy residues 370–392 (PSKDDSRRNRDERGARLITRNDD) and 400–429 (FDLEGSEKEDSPRETARILNRDINRERAVA). Over residues 446 to 456 (EQGTSESNSTG) the composition is skewed to polar residues.

It belongs to the protein kinase superfamily. Ser/Thr protein kinase family. In terms of assembly, in infected plant cells, it interacts with the P.syringae virulence protein avrPphB. In uninfected plants, autophosphorylated form interacts with RPS5. Interacts with FLS2. Post-translationally, cleaved by avrPphB in infected plant cells. Its cleavage serves as a signal that triggers the RPS5-mediated defense system. Autophosphorylates. Autophosphorylation may be required to trigger the RPS5-mediated plant defense system. In terms of processing, palmitoylation at Cys-3 and Cys-6 are required for plasma membrane location that is essential for the RPS5-mediated plant defense response.

The protein localises to the cell membrane. It catalyses the reaction L-seryl-[protein] + ATP = O-phospho-L-seryl-[protein] + ADP + H(+). The enzyme catalyses L-threonyl-[protein] + ATP = O-phospho-L-threonyl-[protein] + ADP + H(+). Its function is as follows. Protein kinase required for plant defense mechanism mediated by the disease resistance (R) protein RPS5. In case of infection by Pseudomonas syringae, AvrPphB triggers RPS5-mediated defense mechanism via the cleavage of PBS1. Both kinase activity and cleavage by avrPphB are independently required to trigger the RPS5-mediated resistance. Contributes to PAMP-triggered immunity (PTI) signaling and defense responses downstream of FLS2. This is Serine/threonine-protein kinase PBS1 from Arabidopsis thaliana (Mouse-ear cress).